The sequence spans 198 residues: Glycerol-3-phosphate acyltransferase (198 aa).

The next 5 membrane-spanning stretches (helical) occupy residues 5–25 (LILLSLLAYVIGSIPSGLWIG), 56–76 (SIVTVMDILKGTVATLLPFFF), 84–104 (FWLLTGAFAIIGHSFPLFAGF), 114–134 (AGVILAYAPLLFVAALIIFLL), and 158–178 (LFMGDWILIILIACITLFVVW).

The protein belongs to the PlsY family. As to quaternary structure, probably interacts with PlsX.

Its subcellular location is the cell membrane. It catalyses the reaction an acyl phosphate + sn-glycerol 3-phosphate = a 1-acyl-sn-glycero-3-phosphate + phosphate. It functions in the pathway lipid metabolism; phospholipid metabolism. Catalyzes the transfer of an acyl group from acyl-phosphate (acyl-PO(4)) to glycerol-3-phosphate (G3P) to form lysophosphatidic acid (LPA). This enzyme utilizes acyl-phosphate as fatty acyl donor, but not acyl-CoA or acyl-ACP. In Listeria welshimeri serovar 6b (strain ATCC 35897 / DSM 20650 / CCUG 15529 / CIP 8149 / NCTC 11857 / SLCC 5334 / V8), this protein is Glycerol-3-phosphate acyltransferase.